We begin with the raw amino-acid sequence, 1402 residues long: DNA-directed RNA polymerase subunit beta' (1402 aa).

Zn(2+) contacts are provided by C71, C73, C86, and C89. Mg(2+) is bound by residues D462, D464, and D466. Zn(2+) contacts are provided by C811, C885, C892, and C895. The interval 1379 to 1402 (RKGTGAGSANQMLQDMTDQVPAAE) is disordered. The segment covering 1385–1395 (GSANQMLQDMT) has biased composition (polar residues).

The protein belongs to the RNA polymerase beta' chain family. The RNAP catalytic core consists of 2 alpha, 1 beta, 1 beta' and 1 omega subunit. When a sigma factor is associated with the core the holoenzyme is formed, which can initiate transcription. Mg(2+) serves as cofactor. The cofactor is Zn(2+).

The catalysed reaction is RNA(n) + a ribonucleoside 5'-triphosphate = RNA(n+1) + diphosphate. In terms of biological role, DNA-dependent RNA polymerase catalyzes the transcription of DNA into RNA using the four ribonucleoside triphosphates as substrates. This is DNA-directed RNA polymerase subunit beta' from Agrobacterium fabrum (strain C58 / ATCC 33970) (Agrobacterium tumefaciens (strain C58)).